A 387-amino-acid polypeptide reads, in one-letter code: ATP phosphoribosyltransferase regulatory subunit (387 aa).

It belongs to the class-II aminoacyl-tRNA synthetase family. HisZ subfamily. In terms of assembly, heteromultimer composed of HisG and HisZ subunits.

Its subcellular location is the cytoplasm. The protein operates within amino-acid biosynthesis; L-histidine biosynthesis; L-histidine from 5-phospho-alpha-D-ribose 1-diphosphate: step 1/9. Its function is as follows. Required for the first step of histidine biosynthesis. May allow the feedback regulation of ATP phosphoribosyltransferase activity by histidine. The sequence is that of ATP phosphoribosyltransferase regulatory subunit from Methylobacillus flagellatus (strain ATCC 51484 / DSM 6875 / VKM B-1610 / KT).